We begin with the raw amino-acid sequence, 798 residues long: RNA cytosine-C(5)-methyltransferase NSUN2 (798 aa).

A compositionally biased stretch (basic residues) spans 1–13 (MGRRNRRNRQRHQ). The interval 1-30 (MGRRNRRNRQRHQRSTEQRSPAEEEQRRKA) is disordered. The span at 14–30 (RSTEQRSPAEEEQRRKA) shows a compositional bias: basic and acidic residues. Residues 186-192 (CAAPGSK), Asp217, Asp244, and Asp270 each bind S-adenosyl-L-methionine. The active-site Nucleophile is the Cys323. Disordered stretches follow at residues 476–499 (DEPAVDTENGETKPCTNQSDSSKT) and 723–798 (KACD…ESVD). Residues 723 to 747 (KACDEEHIDEKMDIDGAKEESKELS) are compositionally biased toward basic and acidic residues. Residues 751-762 (SGDDEDPKEEDV) show a composition bias toward acidic residues. Residues 763 to 772 (IDRGVLEHVA) are compositionally biased toward basic and acidic residues.

It belongs to the class I-like SAM-binding methyltransferase superfamily. RsmB/NOP family. TRM4 subfamily.

The protein resides in the nucleus. Its subcellular location is the nucleolus. It is found in the cytoplasm. It localises to the mitochondrion. The protein localises to the cytoskeleton. The protein resides in the spindle. Its subcellular location is the secreted. It is found in the extracellular exosome. It carries out the reaction cytidine(48) in tRNA + S-adenosyl-L-methionine = 5-methylcytidine(48) in tRNA + S-adenosyl-L-homocysteine + H(+). The enzyme catalyses cytidine(49) in tRNA + S-adenosyl-L-methionine = 5-methylcytidine(49) in tRNA + S-adenosyl-L-homocysteine + H(+). The catalysed reaction is cytidine(50) in tRNA + S-adenosyl-L-methionine = 5-methylcytidine(50) in tRNA + S-adenosyl-L-homocysteine + H(+). It catalyses the reaction cytidine(34) in tRNA precursor + S-adenosyl-L-methionine = 5-methylcytidine(34) in tRNA precursor + S-adenosyl-L-homocysteine + H(+). It carries out the reaction a cytidine in mRNA + S-adenosyl-L-methionine = a 5-methylcytidine in mRNA + S-adenosyl-L-homocysteine + H(+). Its function is as follows. RNA cytosine C(5)-methyltransferase that methylates cytosine to 5-methylcytosine (m5C) in various RNAs, such as tRNAs, mRNAs and some long non-coding RNAs (lncRNAs). Involved in various processes, such as epidermal stem cell differentiation, testis differentiation and maternal to zygotic transition during early development: acts by increasing protein synthesis; cytosine C(5)-methylation promoting tRNA stability and preventing mRNA decay. Methylates cytosine to 5-methylcytosine (m5C) at positions 34 and 48 of intron-containing tRNA(Leu)(CAA) precursors, and at positions 48, 49 and 50 of tRNA(Gly)(GCC) precursors. tRNA methylation is required generation of RNA fragments derived from tRNAs (tRFs). Also mediates C(5)-methylation of mitochondrial tRNAs. Catalyzes cytosine C(5)-methylation of mRNAs, leading to stabilize them and prevent mRNA decay. Cytosine C(5)-methylation of mRNAs also regulates mRNA export. Also mediates cytosine C(5)-methylation of non-coding RNAs, such as vault RNAs (vtRNAs), promoting their processing into regulatory small RNAs. Required for proper spindle assembly and chromosome segregation, independently of its methyltransferase activity. This chain is RNA cytosine-C(5)-methyltransferase NSUN2, found in Xenopus tropicalis (Western clawed frog).